A 190-amino-acid polypeptide reads, in one-letter code: MVWLAELPDEILENLYPGEDVLYSVKKKLYTELKPKYLIVTDRRIIYLDQKILGRYDLIDIPYEKLEFVHFKKGKIGAKFIIRNEEGEEIVLTWMEKDEAEKAIEAIRDAINAIAVEPVSIQKRKGILGFELELSKPKEFITRTYPQAVAKAAPKEDPIERIRKLKELYESGVISREEFEEKKRKLLDQI.

This is an uncharacterized protein from Archaeoglobus fulgidus (strain ATCC 49558 / DSM 4304 / JCM 9628 / NBRC 100126 / VC-16).